A 176-amino-acid chain; its full sequence is Large ribosomal subunit protein uL6 (176 aa).

The protein belongs to the universal ribosomal protein uL6 family. As to quaternary structure, part of the 50S ribosomal subunit.

This protein binds to the 23S rRNA, and is important in its secondary structure. It is located near the subunit interface in the base of the L7/L12 stalk, and near the tRNA binding site of the peptidyltransferase center. The chain is Large ribosomal subunit protein uL6 from Methanothrix thermoacetophila (strain DSM 6194 / JCM 14653 / NBRC 101360 / PT) (Methanosaeta thermophila).